We begin with the raw amino-acid sequence, 813 residues long: Xaa-Pro dipeptidyl-peptidase (813 aa).

Catalysis depends on charge relay system residues Ser-375, Asp-495, and His-526.

Belongs to the peptidase S15 family. As to quaternary structure, homodimer.

The protein resides in the cytoplasm. The enzyme catalyses Hydrolyzes Xaa-Pro-|- bonds to release unblocked, N-terminal dipeptides from substrates including Ala-Pro-|-p-nitroanilide and (sequentially) Tyr-Pro-|-Phe-Pro-|-Gly-Pro-|-Ile.. Its function is as follows. Removes N-terminal dipeptides sequentially from polypeptides having unsubstituted N-termini provided that the penultimate residue is proline. The sequence is that of Xaa-Pro dipeptidyl-peptidase from Lactiplantibacillus plantarum (strain ATCC BAA-793 / NCIMB 8826 / WCFS1) (Lactobacillus plantarum).